A 328-amino-acid polypeptide reads, in one-letter code: 4-hydroxy-3-methylbut-2-enyl diphosphate reductase (328 aa).

Cys24 serves as a coordination point for [4Fe-4S] cluster. Residues His55 and His88 each contribute to the (2E)-4-hydroxy-3-methylbut-2-enyl diphosphate site. Dimethylallyl diphosphate is bound by residues His55 and His88. The isopentenyl diphosphate site is built by His55 and His88. Cys110 provides a ligand contact to [4Fe-4S] cluster. A (2E)-4-hydroxy-3-methylbut-2-enyl diphosphate-binding site is contributed by His138. Residue His138 participates in dimethylallyl diphosphate binding. Residue His138 participates in isopentenyl diphosphate binding. Residue Glu140 is the Proton donor of the active site. A (2E)-4-hydroxy-3-methylbut-2-enyl diphosphate-binding site is contributed by Thr178. Cys208 serves as a coordination point for [4Fe-4S] cluster. Ser236, Ser237, Asn238, and Ser279 together coordinate (2E)-4-hydroxy-3-methylbut-2-enyl diphosphate. Positions 236, 237, 238, and 279 each coordinate dimethylallyl diphosphate. 4 residues coordinate isopentenyl diphosphate: Ser236, Ser237, Asn238, and Ser279.

Belongs to the IspH family. It depends on [4Fe-4S] cluster as a cofactor.

The enzyme catalyses isopentenyl diphosphate + 2 oxidized [2Fe-2S]-[ferredoxin] + H2O = (2E)-4-hydroxy-3-methylbut-2-enyl diphosphate + 2 reduced [2Fe-2S]-[ferredoxin] + 2 H(+). The catalysed reaction is dimethylallyl diphosphate + 2 oxidized [2Fe-2S]-[ferredoxin] + H2O = (2E)-4-hydroxy-3-methylbut-2-enyl diphosphate + 2 reduced [2Fe-2S]-[ferredoxin] + 2 H(+). It participates in isoprenoid biosynthesis; dimethylallyl diphosphate biosynthesis; dimethylallyl diphosphate from (2E)-4-hydroxy-3-methylbutenyl diphosphate: step 1/1. Its pathway is isoprenoid biosynthesis; isopentenyl diphosphate biosynthesis via DXP pathway; isopentenyl diphosphate from 1-deoxy-D-xylulose 5-phosphate: step 6/6. Its function is as follows. Catalyzes the conversion of 1-hydroxy-2-methyl-2-(E)-butenyl 4-diphosphate (HMBPP) into a mixture of isopentenyl diphosphate (IPP) and dimethylallyl diphosphate (DMAPP). Acts in the terminal step of the DOXP/MEP pathway for isoprenoid precursor biosynthesis. The polypeptide is 4-hydroxy-3-methylbut-2-enyl diphosphate reductase (Ehrlichia ruminantium (strain Gardel)).